Reading from the N-terminus, the 731-residue chain is 1,4-alpha-glucan branching enzyme GlgB (731 aa).

Asp409 serves as the catalytic Nucleophile. The Proton donor role is filled by Glu462.

The protein belongs to the glycosyl hydrolase 13 family. GlgB subfamily. In terms of assembly, monomer.

It catalyses the reaction Transfers a segment of a (1-&gt;4)-alpha-D-glucan chain to a primary hydroxy group in a similar glucan chain.. Its pathway is glycan biosynthesis; glycogen biosynthesis. In terms of biological role, catalyzes the formation of the alpha-1,6-glucosidic linkages in glycogen by scission of a 1,4-alpha-linked oligosaccharide from growing alpha-1,4-glucan chains and the subsequent attachment of the oligosaccharide to the alpha-1,6 position. This is 1,4-alpha-glucan branching enzyme GlgB from Roseobacter denitrificans (strain ATCC 33942 / OCh 114) (Erythrobacter sp. (strain OCh 114)).